We begin with the raw amino-acid sequence, 485 residues long: Cysteine--tRNA ligase (485 aa).

Cys28 is a Zn(2+) binding site. The 'HIGH' region signature appears at 30-40; it reads MTVYDLCHVGH. Zn(2+) contacts are provided by Cys209, His234, and Glu238. The short motif at 266–270 is the 'KMSKS' region element; that stretch reads KMSKS. Lys269 contributes to the ATP binding site.

The protein belongs to the class-I aminoacyl-tRNA synthetase family. As to quaternary structure, monomer. Requires Zn(2+) as cofactor.

Its subcellular location is the cytoplasm. It carries out the reaction tRNA(Cys) + L-cysteine + ATP = L-cysteinyl-tRNA(Cys) + AMP + diphosphate. This is Cysteine--tRNA ligase from Nitrosococcus oceani (strain ATCC 19707 / BCRC 17464 / JCM 30415 / NCIMB 11848 / C-107).